The following is a 562-amino-acid chain: Potassium-transporting ATPase potassium-binding subunit (562 aa).

The next 12 helical transmembrane spans lie at phenylalanine 6–phenylalanine 26, tyrosine 62–methionine 82, glycine 132–isoleucine 152, leucine 175–leucine 195, phenylalanine 253–valine 273, leucine 283–leucine 303, phenylalanine 327–valine 347, alanine 356–valine 376, glycine 379–glycine 399, methionine 416–leucine 436, leucine 483–isoleucine 503, and leucine 526–alanine 546.

Belongs to the KdpA family. In terms of assembly, the system is composed of three essential subunits: KdpA, KdpB and KdpC.

The protein resides in the cell inner membrane. Its function is as follows. Part of the high-affinity ATP-driven potassium transport (or Kdp) system, which catalyzes the hydrolysis of ATP coupled with the electrogenic transport of potassium into the cytoplasm. This subunit binds the periplasmic potassium ions and delivers the ions to the membrane domain of KdpB through an intramembrane tunnel. The protein is Potassium-transporting ATPase potassium-binding subunit of Yersinia pseudotuberculosis serotype IB (strain PB1/+).